A 406-amino-acid polypeptide reads, in one-letter code: CMP-sialic acid transporter 2 (406 aa).

At 1–41 (MKNGMAECSVCRSRLVSPSSKAISRAYDNYNYKIRVSSKQR) the chain is on the cytoplasmic side. Residues 42–62 (ALNVFLVVGDCMLVGLQPVLV) traverse the membrane as a helical segment. Residues 63-75 (YMSKVDGKFNFSP) are Lumenal-facing. The helical transmembrane segment at 76–96 (ISVNFLTEIAKVIFAMVMLLF) threads the bilayer. Over 97–148 (QARHQKVGEKPLLSLSTFVQAARNNMLLAVPAGLYAINNYLKFTMQLYFNPA) the chain is Cytoplasmic. A helical membrane pass occupies residues 149-169 (TVKMLSNLKVLVIAVLLKMIM). The Lumenal segment spans residues 170–172 (KRR). Residues 173–193 (FSIIQWEALALLLIGISINQL) traverse the membrane as a helical segment. Topologically, residues 194–201 (RSLPEGAT) are cytoplasmic. Residues 202 to 222 (TVAVPIATGAYICTFIFVTVP) form a helical membrane-spanning segment. Residues 223 to 245 (SLASVYNEYALKSQYDTSIYLQN) are Lumenal-facing. A helical membrane pass occupies residues 246 to 266 (LFLYGYGAIFNFLGILGTVIY). Topologically, residues 267–282 (KGPGSFDILQGHSRAT) are cytoplasmic. A helical membrane pass occupies residues 283 to 303 (MFLILNNAAQGILSSFFFKYA). Residues 304–323 (DTILKKYSSTVATIFTGIAS) lie on the Lumenal side of the membrane. A helical transmembrane segment spans residues 324 to 344 (AALFGHILTMNFLLGISIVFI). At 345–406 (SMHQFFSPLS…SDDRVPLLPR (62 aa)) the chain is on the cytoplasmic side.

It belongs to the nucleotide-sugar transporter family. CMP-Sialate:CMP antiporter (TC 2.A.7.12) subfamily.

Its subcellular location is the golgi apparatus membrane. Sugar transporter involved in the transport of CMP-sialic acid from the cytoplasm into the Golgi. This Arabidopsis thaliana (Mouse-ear cress) protein is CMP-sialic acid transporter 2.